The sequence spans 536 residues: GATA zinc finger domain-containing protein 9 (536 aa).

Composition is skewed to polar residues over residues 1–20 (MTSF…QPHS) and 36–55 (CQSS…NPNA). Disordered regions lie at residues 1-77 (MTSF…LSGS), 183-211 (SSSL…VVRS), 237-258 (RSAF…GGGS), 273-342 (QLHY…GFVQ), and 370-423 (ALFS…NISS). Residues 56 to 72 (TTNNTTTTTTTTTTTTN) show a composition bias toward low complexity. Residues 188–206 (SEDDDCCYETEEDDNGEDG) are compositionally biased toward acidic residues. Basic residues predominate over residues 237 to 247 (RSAFKKNKKDY). Polar residues predominate over residues 273-283 (QLHYSNSMTDN). Low complexity-rich tracts occupy residues 318-335 (SNSN…NNNN) and 379-399 (PSPT…NSGN). A GATA-type zinc finger spans residues 479 to 504 (CRHCGTTDTPEWRRGPDGRKSLCNAC).

The sequence is that of GATA zinc finger domain-containing protein 9 (gtaI) from Dictyostelium discoideum (Social amoeba).